Consider the following 97-residue polypeptide: Ferredoxin-like protein (97 aa).

The 4Fe-4S ferredoxin-type domain occupies 56 to 86 (GQVEVIADGCMECGTCRVLCEESGDIDWSYP).

It to ferredoxins from P.putida and C.tartarivorum, ferredoxin I from A.vinelandii, ferredoxin II from D.desulfuricans.

In terms of biological role, could be a 3Fe-4S cluster-containing protein. The protein is Ferredoxin-like protein (fixX) of Sinorhizobium fredii (strain NBRC 101917 / NGR234).